Consider the following 226-residue polypeptide: N-(5'-phosphoribosyl)anthranilate isomerase (226 aa).

It belongs to the TrpF family.

It carries out the reaction N-(5-phospho-beta-D-ribosyl)anthranilate = 1-(2-carboxyphenylamino)-1-deoxy-D-ribulose 5-phosphate. It participates in amino-acid biosynthesis; L-tryptophan biosynthesis; L-tryptophan from chorismate: step 3/5. The sequence is that of N-(5'-phosphoribosyl)anthranilate isomerase from Synechococcus sp. (strain JA-3-3Ab) (Cyanobacteria bacterium Yellowstone A-Prime).